A 283-amino-acid polypeptide reads, in one-letter code: ATP synthase gamma chain (283 aa).

The protein belongs to the ATPase gamma chain family. As to quaternary structure, F-type ATPases have 2 components, CF(1) - the catalytic core - and CF(0) - the membrane proton channel. CF(1) has five subunits: alpha(3), beta(3), gamma(1), delta(1), epsilon(1). CF(0) has three main subunits: a, b and c.

It is found in the cell membrane. Its function is as follows. Produces ATP from ADP in the presence of a proton gradient across the membrane. The gamma chain is believed to be important in regulating ATPase activity and the flow of protons through the CF(0) complex. The chain is ATP synthase gamma chain from Clostridium kluyveri (strain NBRC 12016).